Here is an 880-residue protein sequence, read N- to C-terminus: GATOR2 complex protein MIOS-A (880 aa).

WD repeat units follow at residues 60-102 (SDTP…NSKC), 113-157 (KHAR…TPEV), 185-224 (GQND…QKMF), 226-264 (NTKA…KPVL), 268-309 (EQPK…TPIG), and 399-441 (RLRA…KQYA). Residues 740–786 (VSCNFCGKSISYSCSSVPHQGRGFSQYGVSGSPTKSKFTSCPGCRKP) form a C4-type zinc finger. Zn(2+)-binding residues include Cys-742, Cys-745, Cys-780, Cys-783, Cys-793, Cys-832, Cys-835, His-837, His-840, His-843, Cys-854, Cys-859, and Cys-863. The RING-type; atypical zinc-finger motif lies at 787-868 (LPRCALCLIN…CSCKCMQLDT (82 aa)).

Belongs to the WD repeat mio family. Component of the GATOR2 subcomplex, composed of MIOS, SEC13, SEH1L, WDR24 and WDR59. The GATOR2 complex interacts with CASTOR1 and CASTOR2; the interaction is negatively regulated by arginine. The GATOR2 complex interacts with SESN1, SESN2 and SESN3; the interaction is negatively regulated by amino acids. Interacts with SAR1; the interaction is direct, disrupted by leucine and mediates the interaction of SAR1 with the GATOR2 complex to negatively regulate the TORC1 signaling upon leucine deprivation.

The protein localises to the lysosome membrane. Its activity is regulated as follows. The GATOR2 complex is negatively regulated by the upstream amino acid sensors CASTOR1 and SESN2, which sequester the GATOR2 complex in absence of amino acids. In the presence of abundant amino acids, GATOR2 is released from CASTOR1 and SESN2 and activated. Its function is as follows. As a component of the GATOR2 complex, functions as an activator of the amino acid-sensing branch of the mTORC1 signaling pathway. The GATOR2 complex indirectly activates mTORC1 through the inhibition of the GATOR1 subcomplex. GATOR2 probably acts as an E3 ubiquitin-protein ligase toward GATOR1. In the presence of abundant amino acids, the GATOR2 complex mediates ubiquitination of the NPRL2 core component of the GATOR1 complex, leading to GATOR1 inactivation. In the absence of amino acids, GATOR2 is inhibited, activating the GATOR1 complex. Within the GATOR2 complex, MIOS is required to prevent autoubiquitination of WDR24, the catalytic subunit of the complex. In Xenopus laevis (African clawed frog), this protein is GATOR2 complex protein MIOS-A.